A 201-amino-acid chain; its full sequence is Potassium-transporting ATPase KdpC subunit (201 aa).

A helical membrane pass occupies residues 7–29 (PALVLLTALTAITGLAYPLAMTG).

This sequence belongs to the KdpC family. In terms of assembly, the system is composed of three essential subunits: KdpA, KdpB and KdpC.

It is found in the cell inner membrane. Part of the high-affinity ATP-driven potassium transport (or Kdp) system, which catalyzes the hydrolysis of ATP coupled with the electrogenic transport of potassium into the cytoplasm. This subunit acts as a catalytic chaperone that increases the ATP-binding affinity of the ATP-hydrolyzing subunit KdpB by the formation of a transient KdpB/KdpC/ATP ternary complex. In Methylobacterium radiotolerans (strain ATCC 27329 / DSM 1819 / JCM 2831 / NBRC 15690 / NCIMB 10815 / 0-1), this protein is Potassium-transporting ATPase KdpC subunit.